The primary structure comprises 510 residues: MFIENFKVESPNVKYTESEIHSVYDYQTTELVHEEKNGTYQWTVKPKTVKYEFKTDVHVPKLGVMLVGWGGNNGSTLTGGVIANREGISWATKDKVQQANYFGSLTQASTIRVGSFNGEEIYAPFKSLLPMVNPDDVVFGGWDISGMNLADAMARAKVFDIDLQKQLRPYMESMVPLPGIYDPDFIAANQGSRANNVIKGTKKEQIDQIIKDIREFKEKNKVDKVVVLWTANTERYSNVVVGLNDTMENLFASVDRNEAEISPSTLYAIACILENVPFINGSPQNTFVPGLIDLAIKRNTLIGGDDFKSGQTKMKSVLVDFLVGAGIKPTSIVSYNHLGNNDGMNLSAPQTFRSKEISKSNVVDDMVSSNAILYEPGEHPDHVVVIKYVPYVGDSKRAMDEYTSEIFMGGKNTIVLHNTCEDSLLAAPIILDLVLLAELSTRIQLKAEGEGKFHSFHPVATILSYLTKAPLVPPGTPVVNALSKQRAMLENILRACVGLAPENNMILEYK.

The NAD(+) site is built by glycine 70, glycine 71, asparagine 72, asparagine 73, aspartate 143, isoleucine 180, glutamine 190, arginine 193, threonine 230, alanine 231, asparagine 232, threonine 233, glycine 281, serine 282, aspartate 306, serine 309, asparagine 340, asparagine 341, aspartate 342, lysine 355, glycine 393, aspartate 394, aspartate 422, and serine 423.

Belongs to the myo-inositol 1-phosphate synthase family. The cofactor is NAD(+).

It is found in the cytoplasm. The protein resides in the cytosol. The protein localises to the nucleus. It carries out the reaction D-glucose 6-phosphate = 1D-myo-inositol 3-phosphate. Its pathway is polyol metabolism; myo-inositol biosynthesis; myo-inositol from D-glucose 6-phosphate: step 1/2. Its function is as follows. Key enzyme in myo-inositol biosynthesis pathway that catalyzes the conversion of glucose 6-phosphate to 1-myo-inositol 1-phosphate in a NAD-dependent manner. This chain is Inositol-3-phosphate synthase, found in Nicotiana tabacum (Common tobacco).